The chain runs to 296 residues: Methylsterol monooxygenase erg25B (296 aa).

The next 3 helical transmembrane spans lie at 50–70, 98–118, and 125–145; these read IMSF…WILI, FVLL…HPMA, and TSVP…FFVL. In terms of domain architecture, Fatty acid hydroxylase spans 140-276; sequence AIFFVLEDTW…FRWWDYLLDT (137 aa). Residues 154 to 158 carry the Histidine box-1 motif; sequence HRALH. Residues 167–171 carry the Histidine box-2 motif; it reads HKIHH. Residues 201 to 221 form a helical membrane-spanning segment; sequence ILWCALTGDLHIFTMYVWIVL. A Histidine box-3 motif is present at residues 251–257; that stretch reads HHDLHHE.

This sequence belongs to the sterol desaturase family. It depends on Fe cation as a cofactor.

It localises to the endoplasmic reticulum membrane. The protein operates within steroid metabolism; ergosterol biosynthesis. Its function is as follows. Sterol-C4-methyl oxidase; part of the third module of ergosterol biosynthesis pathway that includes the late steps of the pathway. Erg25B is a catalytic component of the C-4 demethylation complex that catalyzes the conversion of 4,4-dimethylfecosterol into fecosterol via 4-methylfecosterol. The third module or late pathway involves the ergosterol synthesis itself through consecutive reactions that mainly occur in the endoplasmic reticulum (ER) membrane. Firstly, the squalene synthase erg9 catalyzes the condensation of 2 farnesyl pyrophosphate moieties to form squalene, which is the precursor of all steroids. Squalene synthase is crucial for balancing the incorporation of farnesyl diphosphate (FPP) into sterol and nonsterol isoprene synthesis. Secondly, squalene is converted into lanosterol by the consecutive action of the squalene epoxidase erg1 and the lanosterol synthase erg7. Then, the delta(24)-sterol C-methyltransferase erg6 methylates lanosterol at C-24 to produce eburicol. Eburicol is the substrate of the sterol 14-alpha demethylase encoded by cyp51A and cyp51B, to yield 4,4,24-trimethyl ergosta-8,14,24(28)-trienol. The C-14 reductase erg24 then reduces the C14=C15 double bond which leads to 4,4-dimethylfecosterol. A sequence of further demethylations at C-4, involving the C-4 demethylation complex containing the C-4 methylsterol oxidases erg25A or erg25B, the sterol-4-alpha-carboxylate 3-dehydrogenase erg26 and the 3-keto-steroid reductase erg27, leads to the production of fecosterol via 4-methylfecosterol. The C-8 sterol isomerase erg2 then catalyzes the reaction which results in unsaturation at C-7 in the B ring of sterols and thus converts fecosterol to episterol. The sterol-C5-desaturase erg3B then catalyzes the introduction of a C-5 double bond in the B ring to produce 5-dehydroepisterol. The 2 other sterol-C5-desaturases, erg3A and erg3C, seem to be less important in ergosterol biosynthesis. The C-22 sterol desaturase erg5 further converts 5-dehydroepisterol into ergosta-5,7,22,24(28)-tetraen-3beta-ol by forming the C-22(23) double bond in the sterol side chain. Finally, ergosta-5,7,22,24(28)-tetraen-3beta-ol is substrate of the C-24(28) sterol reductases erg4A and erg4B to produce ergosterol. Possible alternative sterol biosynthetic pathways might exist from fecosterol to ergosterol, depending on the activities of the erg3 isoforms. The protein is Methylsterol monooxygenase erg25B of Aspergillus fumigatus (strain ATCC MYA-4609 / CBS 101355 / FGSC A1100 / Af293) (Neosartorya fumigata).